The sequence spans 447 residues: Na(+)-translocating NADH-quinone reductase subunit A (447 aa).

Belongs to the NqrA family. Composed of six subunits; NqrA, NqrB, NqrC, NqrD, NqrE and NqrF.

It catalyses the reaction a ubiquinone + n Na(+)(in) + NADH + H(+) = a ubiquinol + n Na(+)(out) + NAD(+). NQR complex catalyzes the reduction of ubiquinone-1 to ubiquinol by two successive reactions, coupled with the transport of Na(+) ions from the cytoplasm to the periplasm. NqrA to NqrE are probably involved in the second step, the conversion of ubisemiquinone to ubiquinol. This Neisseria meningitidis serogroup B (strain ATCC BAA-335 / MC58) protein is Na(+)-translocating NADH-quinone reductase subunit A.